A 513-amino-acid chain; its full sequence is Cytochrome P450 monooxygenase CYP3 (513 aa).

The interval 1–21 is disordered; that stretch reads MLPRSLGHSTSELSPPFDGPN. C451 provides a ligand contact to heme.

This sequence belongs to the cytochrome P450 family. Heme is required as a cofactor.

It participates in secondary metabolite biosynthesis. In terms of biological role, cytochrome P450 monooxygenase; part of the gene cluster that mediates the biosynthesis of a tyrosine-derived cytochalasan acting as a fungal signal recognized by resistant rice plants and leads to avirulence in Pi33 resistant rice cultivars. The first step in the pathway is catalyzed by the hybrid PKS-NRPS ACE1, assisted by the enoyl reductase RAP1, that are responsible for fusion of the tyrosine precursor and the polyketide backbone. The polyketide synthase module (PKS) of ACE1 is responsible for the synthesis of the polyketide backbone and the downstream nonribosomal peptide synthetase (NRPS) amidates the carboxyl end of the polyketide with the tyrosine precursor. Because ACE1 lacks a designated enoylreductase (ER) domain, the required activity is provided the enoyl reductase RAP1. Reduction by the hydrolyase ORFZ, followed by dehydration and intra-molecular Diels-Alder cyclization by the Diels-Alderase ORF3 then yield the required isoindolone-fused macrocycle. A number of oxidative steps catalyzed by the tailoring enzymes identified within the cluster, including cytochrome P450 monooxygenases CYP1 to CYP4, the FAD-linked oxidoreductase OXR2 and the short-chain dehydrogenase/reductase OXR1, are further required to afford the final cytochalasans that confer avirulence and which have still to be identified. The monooxygenase CYP1 has been shown to be a site-selective C-18 hydroxylase whereas the function of CYP3 is the site-selective epoxidation of the C-6/C-7 olefin that is present in some intermediate compounds. Finally, SYN2 and RAP2 are not required for avirulence in Pi33 resistant rice cultivars. This is Cytochrome P450 monooxygenase CYP3 from Pyricularia oryzae (strain 70-15 / ATCC MYA-4617 / FGSC 8958) (Rice blast fungus).